Consider the following 184-residue polypeptide: Shikimate kinase (184 aa).

ATP is bound at residue 12–17 (GSGKST). Mg(2+) is bound at residue S16. Substrate-binding residues include D34, R58, and G80. Residue R117 coordinates ATP. Substrate is bound at residue R136. R153 is an ATP binding site. Residues 163–184 (MSRLDDPTPNTSPSSTASGAAT) are disordered. The segment covering 169-184 (PTPNTSPSSTASGAAT) has biased composition (low complexity).

This sequence belongs to the shikimate kinase family. Monomer. Mg(2+) is required as a cofactor.

The protein resides in the cytoplasm. The enzyme catalyses shikimate + ATP = 3-phosphoshikimate + ADP + H(+). Its pathway is metabolic intermediate biosynthesis; chorismate biosynthesis; chorismate from D-erythrose 4-phosphate and phosphoenolpyruvate: step 5/7. Its function is as follows. Catalyzes the specific phosphorylation of the 3-hydroxyl group of shikimic acid using ATP as a cosubstrate. The polypeptide is Shikimate kinase (Mycobacterium marinum (strain ATCC BAA-535 / M)).